We begin with the raw amino-acid sequence, 143 residues long: Hemoglobin subunit alpha-2 (143 aa).

Ser-2 bears the N-acetylserine mark. The 142-residue stretch at 2-143 (SLSSKDKATV…LALALSEKYR (142 aa)) folds into the Globin domain. His-60 contributes to the O2 binding site. His-89 contributes to the heme b binding site.

The protein belongs to the globin family. In terms of assembly, hb 2 is a heterotetramer of two alpha-2 and two beta-1 chains. Hb 3 is a heterotetramer of two alpha-2 and two beta-2 chains. Red blood cells.

Involved in oxygen transport from gills to the various peripheral tissues. The chain is Hemoglobin subunit alpha-2 (hba2) from Arctogadus glacialis (Arctic cod).